Reading from the N-terminus, the 208-residue chain is Uracil phosphoribosyltransferase (208 aa).

Residues arginine 78, arginine 103, and 130–138 (DPMLATGGS) each bind 5-phospho-alpha-D-ribose 1-diphosphate. Uracil contacts are provided by residues isoleucine 193 and 198–200 (GDA). Residue aspartate 199 coordinates 5-phospho-alpha-D-ribose 1-diphosphate.

This sequence belongs to the UPRTase family. Mg(2+) is required as a cofactor.

The enzyme catalyses UMP + diphosphate = 5-phospho-alpha-D-ribose 1-diphosphate + uracil. It functions in the pathway pyrimidine metabolism; UMP biosynthesis via salvage pathway; UMP from uracil: step 1/1. Allosterically activated by GTP. Functionally, catalyzes the conversion of uracil and 5-phospho-alpha-D-ribose 1-diphosphate (PRPP) to UMP and diphosphate. In Psychromonas ingrahamii (strain DSM 17664 / CCUG 51855 / 37), this protein is Uracil phosphoribosyltransferase.